The following is a 518-amino-acid chain: Efflux pump terJ (518 aa).

Residues 43–63 (IAFIVVVCMAQLVSQAGLGQV) traverse the membrane as a helical segment. The N-linked (GlcNAc...) asparagine glycan is linked to Asn-79. 12 consecutive transmembrane segments (helical) span residues 82–102 (QLSWFPAAYSLTVGTFILGAG), 112–132 (LLFTAGYFWLAIWTLVAAFAE), 135–155 (GPVFFCCCRVLQGIGPAFLLP), 177–197 (AFGSTAPSGFIFGGLVSALAA), 204–224 (WGFWFMAILEAVCGIAAIFWV), 244–264 (IAGCVTGISGLLLFNVALNMA), 272–292 (PYIYILLIASLVFFGLFGYIE), 311–331 (FVLATLACGWAAFGVWVFYGW), 339–359 (GISPLFACLQFSPAAISGFVA), 364–384 (GLILQKLPASVVMMISAAAFC), 400–420 (WAQLFVSIIVMPWGMEMSFPA), and 439–459 (SLVATIMNYAISLGLGFGAIV). Residue Asn-466 is glycosylated (N-linked (GlcNAc...) asparagine). Residues 477 to 497 (AWYLGVGLAASGIILTMFFAL) form a helical membrane-spanning segment.

It belongs to the major facilitator superfamily.

It localises to the cell membrane. Its function is as follows. Efflux pump that might be required for efficient secretion of terrein or other secondary metabolies produced by the terrein genne cluster. The chain is Efflux pump terJ from Aspergillus terreus (strain NIH 2624 / FGSC A1156).